Consider the following 433-residue polypeptide: Glutamate-1-semialdehyde 2,1-aminomutase (433 aa).

K273 carries the N6-(pyridoxal phosphate)lysine modification.

The protein belongs to the class-III pyridoxal-phosphate-dependent aminotransferase family. HemL subfamily. Homodimer. Requires pyridoxal 5'-phosphate as cofactor.

The protein localises to the cytoplasm. It carries out the reaction (S)-4-amino-5-oxopentanoate = 5-aminolevulinate. It participates in porphyrin-containing compound metabolism; protoporphyrin-IX biosynthesis; 5-aminolevulinate from L-glutamyl-tRNA(Glu): step 2/2. This chain is Glutamate-1-semialdehyde 2,1-aminomutase, found in Ralstonia nicotianae (strain ATCC BAA-1114 / GMI1000) (Ralstonia solanacearum).